The sequence spans 132 residues: Large ribosomal subunit protein bL21 (132 aa).

A disordered region spans residues 104–132 (GKAPSIGPRPPREKKPVVETSAEADDAAA).

It belongs to the bacterial ribosomal protein bL21 family. Part of the 50S ribosomal subunit. Contacts protein L20.

Its function is as follows. This protein binds to 23S rRNA in the presence of protein L20. In Rhodopseudomonas palustris (strain BisB18), this protein is Large ribosomal subunit protein bL21.